We begin with the raw amino-acid sequence, 142 residues long: Transcription antitermination protein NusB (142 aa).

This sequence belongs to the NusB family.

Functionally, involved in transcription antitermination. Required for transcription of ribosomal RNA (rRNA) genes. Binds specifically to the boxA antiterminator sequence of the ribosomal RNA (rrn) operons. In Roseiflexus sp. (strain RS-1), this protein is Transcription antitermination protein NusB.